The sequence spans 312 residues: MLLVKMTTHIFNADDLLQALQQAKAEKNFSSVFSLDWNKLRTAKRNTSVKYVTVYVIIKGKKAPLMFNFQNEKHVGTIPPSTDEEVIRMNAENPKFLVKKRDRDPCLQFNKYKISPPLEDDGLTVKKNEQGEEIYPGDEEKSKLFQIIELLEEAFEDAVQKGPETMKTKHVIKLIQRKISNSAAKNADKPLPNPIARIRIKINSGTNILTPILLNKSKPITLQNGKTSFEELKDEDGVKANPDNIHKLIESHSIHDGIINARSICISNMGISFPLCLEMGVVKVFEKNNGIDVDSIYSSDDISTLVNQIAIA.

Belongs to the asfivirus CP312R family.

The protein resides in the virion. This is an uncharacterized protein from African swine fever virus (isolate Warthog/Namibia/Wart80/1980) (ASFV).